The chain runs to 155 residues: SsrA-binding protein (155 aa).

The protein belongs to the SmpB family.

The protein resides in the cytoplasm. Functionally, required for rescue of stalled ribosomes mediated by trans-translation. Binds to transfer-messenger RNA (tmRNA), required for stable association of tmRNA with ribosomes. tmRNA and SmpB together mimic tRNA shape, replacing the anticodon stem-loop with SmpB. tmRNA is encoded by the ssrA gene; the 2 termini fold to resemble tRNA(Ala) and it encodes a 'tag peptide', a short internal open reading frame. During trans-translation Ala-aminoacylated tmRNA acts like a tRNA, entering the A-site of stalled ribosomes, displacing the stalled mRNA. The ribosome then switches to translate the ORF on the tmRNA; the nascent peptide is terminated with the 'tag peptide' encoded by the tmRNA and targeted for degradation. The ribosome is freed to recommence translation, which seems to be the essential function of trans-translation. The chain is SsrA-binding protein from Clostridium acetobutylicum (strain ATCC 824 / DSM 792 / JCM 1419 / IAM 19013 / LMG 5710 / NBRC 13948 / NRRL B-527 / VKM B-1787 / 2291 / W).